We begin with the raw amino-acid sequence, 383 residues long: Homeobox protein SHOOT MERISTEMLESS (383 aa).

The interval 37–58 (HQQHHGHDQQHQHQQQHDGYAY) is disordered. In terms of domain architecture, ELK spans 263 to 283 (ELKGQLLRKYSGYLGSLKQEF). Residues 284-347 (MKKRKKGKLP…NQRKRHWKPS (64 aa)) constitute a DNA-binding region (homeobox; TALE-type).

Belongs to the TALE/KNOX homeobox family.

It is found in the nucleus. Required for shoot apical meristem formation during embryogenesis. Probably binds to the DNA sequence 5'-TGAC-3'. This Brassica oleracea (Wild cabbage) protein is Homeobox protein SHOOT MERISTEMLESS (STM).